The sequence spans 599 residues: Protein ECM25 (599 aa).

Residues 181 to 359 (NRLTPLAIRQ…NLLDFFPEIA (179 aa)) enclose the Rho-GAP domain. Disordered regions lie at residues 362 to 447 (ISSP…PLPI), 468 to 495 (ASSSTDTLSSPTKTPSADSLPLSNSSTD), and 543 to 563 (ELQEKKKKNETTSKTADKFSQ). Low complexity-rich tracts occupy residues 363-373 (SSPPSSVSSSS), 396-413 (TLPRSRSPSPQRSVTSPT), and 468-483 (ASSSTDTLSSPTKTPS). Positions 543 to 562 (ELQEKKKKNETTSKTADKFS) are enriched in basic and acidic residues.

It localises to the cytoplasm. Its function is as follows. May be involved in cell wall organization and biogenesis. This chain is Protein ECM25 (ECM25), found in Saccharomyces cerevisiae (strain ATCC 204508 / S288c) (Baker's yeast).